Consider the following 225-residue polypeptide: ATP synthase F(0) complex subunit a (225 aa).

The next 6 membrane-spanning stretches (helical) occupy residues 10-30, 69-89, 96-116, 135-155, 168-188, and 194-214; these read PSLL…ILLL, LILI…LLPY, QLSM…LIGL, LLIP…PIAL, LLIQ…PPLS, and VLIL…YVFV.

Belongs to the ATPase A chain family. As to quaternary structure, component of the ATP synthase complex composed at least of ATP5F1A/subunit alpha, ATP5F1B/subunit beta, ATP5MC1/subunit c (homooctomer), MT-ATP6/subunit a, MT-ATP8/subunit 8, ATP5ME/subunit e, ATP5MF/subunit f, ATP5MG/subunit g, ATP5MK/subunit k, ATP5MJ/subunit j, ATP5F1C/subunit gamma, ATP5F1D/subunit delta, ATP5F1E/subunit epsilon, ATP5PF/subunit F6, ATP5PB/subunit b, ATP5PD/subunit d, ATP5PO/subunit OSCP. ATP synthase complex consists of a soluble F(1) head domain (subunits alpha(3) and beta(3)) - the catalytic core - and a membrane F(0) domain - the membrane proton channel (subunits c, a, 8, e, f, g, k and j). These two domains are linked by a central stalk (subunits gamma, delta, and epsilon) rotating inside the F1 region and a stationary peripheral stalk (subunits F6, b, d, and OSCP). Interacts with DNAJC30; interaction is direct.

It is found in the mitochondrion inner membrane. The enzyme catalyses H(+)(in) = H(+)(out). In terms of biological role, subunit a, of the mitochondrial membrane ATP synthase complex (F(1)F(0) ATP synthase or Complex V) that produces ATP from ADP in the presence of a proton gradient across the membrane which is generated by electron transport complexes of the respiratory chain. ATP synthase complex consist of a soluble F(1) head domain - the catalytic core - and a membrane F(1) domain - the membrane proton channel. These two domains are linked by a central stalk rotating inside the F(1) region and a stationary peripheral stalk. During catalysis, ATP synthesis in the catalytic domain of F(1) is coupled via a rotary mechanism of the central stalk subunits to proton translocation. With the subunit c (ATP5MC1), forms the proton-conducting channel in the F(0) domain, that contains two crucial half-channels (inlet and outlet) that facilitate proton movement from the mitochondrial intermembrane space (IMS) into the matrix. Protons are taken up via the inlet half-channel and released through the outlet half-channel, following a Grotthuss mechanism. This Alligator mississippiensis (American alligator) protein is ATP synthase F(0) complex subunit a.